A 218-amino-acid polypeptide reads, in one-letter code: Deoxyribose-phosphate aldolase (218 aa).

The active-site Proton donor/acceptor is Asp92. The active-site Schiff-base intermediate with acetaldehyde is Lys156. Lys185 acts as the Proton donor/acceptor in catalysis.

Belongs to the DeoC/FbaB aldolase family. DeoC type 1 subfamily.

It localises to the cytoplasm. It carries out the reaction 2-deoxy-D-ribose 5-phosphate = D-glyceraldehyde 3-phosphate + acetaldehyde. The protein operates within carbohydrate degradation; 2-deoxy-D-ribose 1-phosphate degradation; D-glyceraldehyde 3-phosphate and acetaldehyde from 2-deoxy-alpha-D-ribose 1-phosphate: step 2/2. Its function is as follows. Catalyzes a reversible aldol reaction between acetaldehyde and D-glyceraldehyde 3-phosphate to generate 2-deoxy-D-ribose 5-phosphate. The chain is Deoxyribose-phosphate aldolase from Desulfitobacterium hafniense (strain Y51).